The chain runs to 178 residues: Large ribosomal subunit protein uL6 (178 aa).

Belongs to the universal ribosomal protein uL6 family. In terms of assembly, part of the 50S ribosomal subunit.

In terms of biological role, this protein binds to the 23S rRNA, and is important in its secondary structure. It is located near the subunit interface in the base of the L7/L12 stalk, and near the tRNA binding site of the peptidyltransferase center. The sequence is that of Large ribosomal subunit protein uL6 from Staphylococcus saprophyticus subsp. saprophyticus (strain ATCC 15305 / DSM 20229 / NCIMB 8711 / NCTC 7292 / S-41).